The chain runs to 500 residues: Aromatic-L-amino-acid decarboxylase (500 aa).

Position 102 (proline 102) interacts with L-tryptophan. Serine 168 contributes to the pyridoxal 5'-phosphate binding site. Histidine 203 is a binding site for L-tryptophan. Threonine 262 is a pyridoxal 5'-phosphate binding site. Histidine 318 is an L-tryptophan binding site. N6-(pyridoxal phosphate)lysine is present on lysine 319. Tyrosine 348 is an L-tryptophan binding site.

This sequence belongs to the group II decarboxylase family. Homodimer. Pyridoxal 5'-phosphate serves as cofactor.

The enzyme catalyses L-tryptophan + H(+) = tryptamine + CO2. The catalysed reaction is 5-hydroxy-L-tryptophan + H(+) = serotonin + CO2. Its function is as follows. Catalyzes the decarboxylation of L-tryptophan to tryptamine and L-5-hydroxytryptophan to serotonin, respectively. This is Aromatic-L-amino-acid decarboxylase from Catharanthus roseus (Madagascar periwinkle).